A 176-amino-acid polypeptide reads, in one-letter code: CDP-archaeol synthase (176 aa).

Helical transmembrane passes span 12–32 (FIYW…SPVL), 60–80 (GFYV…IILC), 85–105 (ILIG…GSFI), 118–138 (PIID…FLGI), and 141–161 (FISY…LHII).

This sequence belongs to the CDP-archaeol synthase family. Mg(2+) serves as cofactor.

Its subcellular location is the cell membrane. The enzyme catalyses 2,3-bis-O-(geranylgeranyl)-sn-glycerol 1-phosphate + CTP + H(+) = CDP-2,3-bis-O-(geranylgeranyl)-sn-glycerol + diphosphate. Its pathway is membrane lipid metabolism; glycerophospholipid metabolism. Its function is as follows. Catalyzes the formation of CDP-2,3-bis-(O-geranylgeranyl)-sn-glycerol (CDP-archaeol) from 2,3-bis-(O-geranylgeranyl)-sn-glycerol 1-phosphate (DGGGP) and CTP. This reaction is the third ether-bond-formation step in the biosynthesis of archaeal membrane lipids. In Staphylothermus marinus (strain ATCC 43588 / DSM 3639 / JCM 9404 / F1), this protein is CDP-archaeol synthase.